The sequence spans 543 residues: 2-succinyl-5-enolpyruvyl-6-hydroxy-3-cyclohexene-1-carboxylate synthase (543 aa).

The protein belongs to the TPP enzyme family. MenD subfamily. In terms of assembly, homodimer. The cofactor is Mg(2+). It depends on Mn(2+) as a cofactor. Requires thiamine diphosphate as cofactor.

The enzyme catalyses isochorismate + 2-oxoglutarate + H(+) = 5-enolpyruvoyl-6-hydroxy-2-succinyl-cyclohex-3-ene-1-carboxylate + CO2. The protein operates within quinol/quinone metabolism; 1,4-dihydroxy-2-naphthoate biosynthesis; 1,4-dihydroxy-2-naphthoate from chorismate: step 2/7. It functions in the pathway quinol/quinone metabolism; menaquinone biosynthesis. In terms of biological role, catalyzes the thiamine diphosphate-dependent decarboxylation of 2-oxoglutarate and the subsequent addition of the resulting succinic semialdehyde-thiamine pyrophosphate anion to isochorismate to yield 2-succinyl-5-enolpyruvyl-6-hydroxy-3-cyclohexene-1-carboxylate (SEPHCHC). In Corynebacterium glutamicum (strain R), this protein is 2-succinyl-5-enolpyruvyl-6-hydroxy-3-cyclohexene-1-carboxylate synthase.